A 604-amino-acid polypeptide reads, in one-letter code: NRPS-independent siderophore synthetase-like protein ankE (604 aa).

The enzyme catalyses cyclo(L-arginyl-(Z)-dehydro-4-O-homoseryl-tyrosyl) + citrate + ATP = NK13650 B + AMP + diphosphate + H(+). Its pathway is secondary metabolite biosynthesis. NRPS-independent siderophore synthetase-like protein; part of the ank cluster that mediates the biosynthesis of NK13650 C, a highly modified cyclo-arginine-tyrosine dipeptide. AnkE is responsible of the production of NK13650 B via ligation of citrate to the ankD product. Within the pathway, the cyclodipeptide synthase ankA acts as the scaffold-generating enzyme and is responsible for formation of the cyclo-Arg-Tyr diketopiperazine (cRY) from L-Arg and L-Tyr. The ankA product cRY is desaturated by the cytochrome P450 monooxygenase ankB to yield a dehydro-cyclodipeptide intermediate. The FAD-dependent monooxygenase ankC then installs the m-OH, ankD catalyzes the attachment of L-homoserine, and ankE ligates citrate to the ankD product to yield NK13650 B. The O-methyltransferase ankF is responsible for methylation of the C-17 phenol group of NK13650 B to produce NK13650 D. Amidation of NK13650 D with L-Asp by ankG then leads to the production of NK13650 C, whereas amidation of NK13650 B produces NK13650 A. The protein is NRPS-independent siderophore synthetase-like protein ankE of Aspergillus thermomutatus (Neosartorya pseudofischeri).